The sequence spans 343 residues: MIYRKIDDRSVSVVPQNPDDLFALRRVVRAGDRVAGSTTRAIRKEREYARPDRGERVRIKISLEVEAASLDGMLGRLRLGGTIHESSSEQVKRGSHHSLSVHAGDAISITKDWGPGERKLLRGSGGQGFVLVAVDTSECGIARLHGTHLEMITTLRSGSPGKRYKTSFNIGGYLEAAAAAAGLAVRKGDSLIVFGPGETRKKLANLMQGRRLPEPAVVEGIDSAGEDGIRLFTRSDAMRDSMSGSRMARVMDIIDSVMLLASKKSAKFSMGYAETRAAAEAGAIESLVFSDGLISAAGEQQAVDFLNNAQATGAGIFGADSTTDAGLRVDGLGGVIATLRFKP.

It belongs to the eukaryotic release factor 1 family. Pelota subfamily. Monomer. A divalent metal cation is required as a cofactor.

It is found in the cytoplasm. May function in recognizing stalled ribosomes, interact with stem-loop structures in stalled mRNA molecules, and effect endonucleolytic cleavage of the mRNA. May play a role in the release non-functional ribosomes and degradation of damaged mRNAs. Has endoribonuclease activity. The polypeptide is Protein pelota homolog (Cenarchaeum symbiosum (strain A)).